A 193-amino-acid polypeptide reads, in one-letter code: Oligoribonuclease (193 aa).

The Exonuclease domain maps to 14-177 (LIWIDLEMTG…SDIYDSIAEL (164 aa)). Tyr135 is an active-site residue.

The protein belongs to the oligoribonuclease family.

It localises to the cytoplasm. In terms of biological role, 3'-to-5' exoribonuclease specific for small oligoribonucleotides. In Xylella fastidiosa (strain Temecula1 / ATCC 700964), this protein is Oligoribonuclease.